The chain runs to 65 residues: Large ribosomal subunit protein bL35 (65 aa).

Positions 1–52 (MPKMKSNRAAAKRFKRTANGGFKSGNSFTSHRFHGKTKKQRRQLRGLSMMDK) are disordered. Residues 31-44 (HRFHGKTKKQRRQL) show a composition bias toward basic residues.

The protein belongs to the bacterial ribosomal protein bL35 family.

This is Large ribosomal subunit protein bL35 from Limosilactobacillus reuteri (strain DSM 20016) (Lactobacillus reuteri).